The following is a 160-amino-acid chain: MLLLLLSIIVLHVAVLVLLFVSTIVSQWIVGNGHATDLWQNCSTSSSGNVHHCFSSSPNEWLQSVQATMILSIIFSILSLFLFFCQLFTLTKGGRFYITGIFQILAGLCVMSAAAIYTVRHPEWHLNSDYSYGFAYILAWVAFPLALLSGVIYVILRKRE.

A topological domain (cytoplasmic) is located at residue methionine 1. A helical membrane pass occupies residues 2–31 (LLLLLSIIVLHVAVLVLLFVSTIVSQWIVG). At 32–64 (NGHATDLWQNCSTSSSGNVHHCFSSSPNEWLQS) the chain is on the extracellular side. An N-linked (GlcNAc...) asparagine glycan is attached at asparagine 41. A helical transmembrane segment spans residues 65 to 91 (VQATMILSIIFSILSLFLFFCQLFTLT). Topologically, residues 92 to 95 (KGGR) are cytoplasmic. The helical transmembrane segment at 96–119 (FYITGIFQILAGLCVMSAAAIYTV) threads the bilayer. Residues 120 to 133 (RHPEWHLNSDYSYG) are Extracellular-facing. A helical transmembrane segment spans residues 134–156 (FAYILAWVAFPLALLSGVIYVIL). Topologically, residues 157–160 (RKRE) are cytoplasmic.

It belongs to the PMP-22/EMP/MP20 family. Post-translationally, ubiquitinated by the DCX(DCAF13) E3 ubiquitin ligase complex, leading to its degradation.

The protein localises to the cell membrane. Might be involved in growth regulation, and in myelinization in the peripheral nervous system. The protein is Peripheral myelin protein 22 (PMP22) of Homo sapiens (Human).